Here is a 524-residue protein sequence, read N- to C-terminus: Excitatory amino acid transporter 3 (524 aa).

Residues 1-18 lie on the Cytoplasmic side of the membrane; it reads MGKPARKGCEWKRFLKNN. Residues 19–38 form a helical membrane-spanning segment; that stretch reads WVLLSTVAAVVLGITTGVLV. Residues 39 to 61 lie on the Extracellular side of the membrane; it reads REHSNLSTLEKFYFAFPGEILMR. Asn-43 carries N-linked (GlcNAc...) asparagine glycosylation. A helical transmembrane segment spans residues 62–82; that stretch reads MLKLIILPLIISSMITGVAAL. Residues 83 to 93 lie on the Cytoplasmic side of the membrane; sequence DSNVSGKIGLR. A helical membrane pass occupies residues 94–114; it reads AVVYYFCTTLIAVILGIVLVV. Residues Tyr-98, Thr-101, and Thr-102 each coordinate Na(+). The Extracellular segment spans residues 115–205; the sequence is SIKPGVTQKV…KTKEYKIVGM (91 aa). N-linked (GlcNAc...) asparagine glycans are attached at residues Asn-178 and Asn-195. The chain crosses the membrane as a helical span at residues 206–229; it reads YSDGINVLGLIVFCLVFGLVIGKM. Over 230–238 the chain is Cytoplasmic; the sequence is GEKGQILVD. Residues 239 to 266 form a helical membrane-spanning segment; it reads FFNALSDATMKIVQIIMCYMPLGILFLI. Over 267 to 286 the chain is Extracellular; sequence AGKIIEVEDWEIFRKLGLYM. The chain crosses the membrane as a helical span at residues 287–308; the sequence is ATVLTGLAIHSIVILPLIYFIV. At 309–313 the chain is on the cytoplasmic side; it reads VRKNP. Positions 314 to 344 form an intramembrane region, discontinuously helical; that stretch reads FRFAMGMAQALLTALMISSSSATLPVTFRCA. L-aspartate contacts are provided by Ser-331 and Ser-333. The Cytoplasmic segment spans residues 345–353; it reads EENNQVDKR. Residues 354-380 traverse the membrane as a helical segment; that stretch reads ITRFVLPVGATINMDGTALYEAVAAVF. Na(+)-binding residues include Gly-362, Thr-364, Asn-366, and Asp-368. Thr-370 contributes to the L-aspartate binding site. The Extracellular segment spans residues 381–393; the sequence is IAQLNDLDLGIGQ. Positions 394-427 form an intramembrane region, discontinuously helical; the sequence is IITISITATSASIGAAGVPQAGLVTMVIVLSAVG. Residues Ser-405, Ile-406, and Ala-408 each coordinate Na(+). An L-aspartate-binding site is contributed by Val-411. At 428 to 440 the chain is on the extracellular side; it reads LPAEDVTLIIAVD. Residues 441–462 form a helical membrane-spanning segment; sequence WLLDRFRTMVNVLGDAFGTGIV. Positions 447, 448, and 451 each coordinate L-aspartate. The Na(+) site is built by Asn-451 and Asp-455. Residues 463–524 are Cytoplasmic-facing; sequence EKLSKKELEQ…TISFTQTSQF (62 aa). 2 positions are modified to phosphoserine: Ser-517 and Ser-522.

The protein belongs to the dicarboxylate/amino acid:cation symporter (DAACS) (TC 2.A.23) family. SLC1A1 subfamily. In terms of assembly, homotrimer. Interacts with ARL6IP5. Interacts with RTN2 (via N-terminus); the interaction promotes cell surface expression of SLC1A1. Interacts with SORCS2; this interaction is important for normal expression at the cell membrane. Glycosylated. Expressed in all tissues tested including liver, muscle, testis, ovary, retinoblastoma cell line, neurons and brain (in which there was dense expression in substantia nigra, red nucleus, hippocampus and in cerebral cortical layers).

It localises to the cell membrane. Its subcellular location is the apical cell membrane. It is found in the synapse. The protein resides in the synaptosome. The protein localises to the early endosome membrane. It localises to the late endosome membrane. Its subcellular location is the recycling endosome membrane. The catalysed reaction is K(+)(in) + L-glutamate(out) + 3 Na(+)(out) + H(+)(out) = K(+)(out) + L-glutamate(in) + 3 Na(+)(in) + H(+)(in). The enzyme catalyses K(+)(in) + L-aspartate(out) + 3 Na(+)(out) + H(+)(out) = K(+)(out) + L-aspartate(in) + 3 Na(+)(in) + H(+)(in). It catalyses the reaction D-aspartate(out) + K(+)(in) + 3 Na(+)(out) + H(+)(out) = D-aspartate(in) + K(+)(out) + 3 Na(+)(in) + H(+)(in). It carries out the reaction K(+)(in) + L-cysteine(out) + 3 Na(+)(out) + H(+)(out) = K(+)(out) + L-cysteine(in) + 3 Na(+)(in) + H(+)(in). Sodium-dependent, high-affinity amino acid transporter that mediates the uptake of L-glutamate and also L-aspartate and D-aspartate. Can also transport L-cysteine. Functions as a symporter that transports one amino acid molecule together with two or three Na(+) ions and one proton, in parallel with the counter-transport of one K(+) ion. Mediates Cl(-) flux that is not coupled to amino acid transport; this avoids the accumulation of negative charges due to aspartate and Na(+) symport. Plays an important role in L-glutamate and L-aspartate reabsorption in renal tubuli. Plays a redundant role in the rapid removal of released glutamate from the synaptic cleft, which is essential for terminating the postsynaptic action of glutamate. Contributes to glutathione biosynthesis and protection against oxidative stress via its role in L-glutamate and L-cysteine transport. Negatively regulated by ARL6IP5. The protein is Excitatory amino acid transporter 3 of Homo sapiens (Human).